The sequence spans 416 residues: MPATSFYADAAYNTQKSRQALDPDIAIDDSDLSVDEIQELEIAAADPATFGASANRRSTDLVRLYLQEIGRVRLLGRDEEVSEAQKVQRYLKLRIVLANAVKQGDEVATPYLHLIEVQERLASELGHRPSLERWAATAGINLCDLKPILSEGKRRWAEIAKMTVEELEKMQSQGLQSKEHMIKANLRLVVSVAKKYQNRGLELLDLVQEGTLGLERAVEKFDPTKGYRFSTYAYWWIRQGITRAIATSSRTIRLPVHITEKLNKIKKAQRKIAQEKGRTPTLEDLAIELDMTPTQVREVLLRVPRSVSLETKVGKDKDTELGELLETDGVTPEEMLMRESLQRDLQHLLADLTSRERDVILMRFGLADGHPYSLAEIGRALDLSRERVRQIESKALQKLRQPKRRNLIRDYLESLS.

Positions 205–218 (DLVQEGTLGLERAV) match the Polymerase core binding motif. The segment at residues 374–393 (LAEIGRALDLSRERVRQIES) is a DNA-binding region (H-T-H motif).

This sequence belongs to the sigma-70 factor family.

Sigma factors are initiation factors that promote the attachment of RNA polymerase to specific initiation sites and are then released. The sequence is that of RNA polymerase sigma-C factor (sigC) from Nostoc sp. (strain PCC 7120 / SAG 25.82 / UTEX 2576).